A 155-amino-acid chain; its full sequence is Endoribonuclease YbeY (155 aa).

The Zn(2+) site is built by histidine 117, histidine 121, and histidine 127.

Belongs to the endoribonuclease YbeY family. Zn(2+) is required as a cofactor.

The protein localises to the cytoplasm. Functionally, single strand-specific metallo-endoribonuclease involved in late-stage 70S ribosome quality control and in maturation of the 3' terminus of the 16S rRNA. The sequence is that of Endoribonuclease YbeY from Psychrobacter cryohalolentis (strain ATCC BAA-1226 / DSM 17306 / VKM B-2378 / K5).